We begin with the raw amino-acid sequence, 2655 residues long: Probable polyketide synthase 42 (2655 aa).

A Ketosynthase family 3 (KS3) domain is found at 16–445 (QNGVAVIGVG…GSNCCIILSE (430 aa)). Residues cysteine 186, histidine 325, and histidine 368 each act as for beta-ketoacyl synthase activity in the active site. The tract at residues 634–667 (GIKSDIMVGHSFGEIACSYCSGMVDFKTLCYLTY) is acyl/malonyl transferase. Residue serine 644 is the For acyl/malonyl transferase activity of the active site. An N-terminal hotdog fold region spans residues 926 to 1059 (HPTWKKANKN…ANYSLFKHND (134 aa)). Residues 926–1234 (HPTWKKANKN…CKSSIPIIDS (309 aa)) form the PKS/mFAS DH domain. The active-site Proton acceptor; for dehydratase activity is histidine 970. The C-terminal hotdog fold stretch occupies residues 1074–1234 (NYTIISKDEL…CKSSIPIIDS (161 aa)). Residue aspartate 1146 is the Proton donor; for dehydratase activity of the active site. Residues 1700–1719 (YNNNNNNNNNNNNNNNNNNN) form a disordered region. The Carrier domain occupies 2517–2594 (NENNNIGDLL…TTIEIIIKGY (78 aa)). Serine 2554 carries the post-translational modification O-(pantetheine 4'-phosphoryl)serine. Residues 2612 to 2655 (SVVQKETIKDNNENKDDIKIDMDDKKENLKGKKENIDDKKENNN) form a disordered region. Basic and acidic residues predominate over residues 2617–2655 (ETIKDNNENKDDIKIDMDDKKENLKGKKENIDDKKENNN). Positions 2618–2655 (TIKDNNENKDDIKIDMDDKKENLKGKKENIDDKKENNN) form a coiled coil.

Pantetheine 4'-phosphate is required as a cofactor.

Probable polyketide synthase. In Dictyostelium discoideum (Social amoeba), this protein is Probable polyketide synthase 42 (pks42).